Reading from the N-terminus, the 225-residue chain is Ribosomal RNA small subunit methyltransferase G (225 aa).

S-adenosyl-L-methionine-binding positions include G71, L76, 121-122 (AE), and R139. A disordered region spans residues 204–225 (VVEARRATPSNGRGRPGRSSRR).

Belongs to the methyltransferase superfamily. RNA methyltransferase RsmG family.

The protein localises to the cytoplasm. Specifically methylates the N7 position of guanine in position 518 of 16S rRNA. In Mycobacterium sp. (strain JLS), this protein is Ribosomal RNA small subunit methyltransferase G.